The chain runs to 161 residues: Small ribosomal subunit protein uS9 (161 aa).

The span at 1 to 21 (MATLQSLADLNRANTQTSNPE) shows a compositional bias: polar residues. The segment at 1–25 (MATLQSLADLNRANTQTSNPENEAP) is disordered.

It belongs to the universal ribosomal protein uS9 family.

In Methylorubrum extorquens (strain CM4 / NCIMB 13688) (Methylobacterium extorquens), this protein is Small ribosomal subunit protein uS9.